The primary structure comprises 243 residues: MEDSFLQSFGRLSLQPQQQQQRQRPPRPPPRGTPPRRHSFRKHLYLLRGLPGSGKTTLARQLQHDFPRALIFSTDDFFFREDGAYEFNPDFLEEAHEWNQKRARKAMRNGISPIIIDNTNLHAWEMKPYAVMALENNYEVIFREPDTRWKFNVQELARRNIHGVSREKIHRMKERYEHDVTFHSVLHAEKPSRMNRNQDRNNALPSNNARYWNSYTEFPNRRAHGGFTNESSYHRRGGCHHGY.

The segment at 1-38 is disordered; that stretch reads MEDSFLQSFGRLSLQPQQQQQRQRPPRPPPRGTPPRRH.

As to quaternary structure, interacts with dynactin subunit proteins, including DCTN4, DCTN5 and DCTN5.

In terms of biological role, might play a role in adipocyte differentiation and triglyceride accumulation. In Homo sapiens (Human), this protein is NEDD4-binding protein 2-like 1 (N4BP2L1).